The primary structure comprises 188 residues: ATP synthase subunit delta (188 aa).

This sequence belongs to the ATPase delta chain family. F-type ATPases have 2 components, F(1) - the catalytic core - and F(0) - the membrane proton channel. F(1) has five subunits: alpha(3), beta(3), gamma(1), delta(1), epsilon(1). F(0) has three main subunits: a(1), b(2) and c(10-14). The alpha and beta chains form an alternating ring which encloses part of the gamma chain. F(1) is attached to F(0) by a central stalk formed by the gamma and epsilon chains, while a peripheral stalk is formed by the delta and b chains.

Its subcellular location is the cell inner membrane. Its function is as follows. F(1)F(0) ATP synthase produces ATP from ADP in the presence of a proton or sodium gradient. F-type ATPases consist of two structural domains, F(1) containing the extramembraneous catalytic core and F(0) containing the membrane proton channel, linked together by a central stalk and a peripheral stalk. During catalysis, ATP synthesis in the catalytic domain of F(1) is coupled via a rotary mechanism of the central stalk subunits to proton translocation. This protein is part of the stalk that links CF(0) to CF(1). It either transmits conformational changes from CF(0) to CF(1) or is implicated in proton conduction. The protein is ATP synthase subunit delta of Rhizobium etli (strain ATCC 51251 / DSM 11541 / JCM 21823 / NBRC 15573 / CFN 42).